A 502-amino-acid chain; its full sequence is Glycogen synthase (502 aa).

Lys24 contributes to the ADP-alpha-D-glucose binding site.

It belongs to the glycosyltransferase 1 family. Bacterial/plant glycogen synthase subfamily.

It carries out the reaction [(1-&gt;4)-alpha-D-glucosyl](n) + ADP-alpha-D-glucose = [(1-&gt;4)-alpha-D-glucosyl](n+1) + ADP + H(+). The protein operates within glycan biosynthesis; glycogen biosynthesis. Synthesizes alpha-1,4-glucan chains using ADP-glucose. In Nitrosomonas eutropha (strain DSM 101675 / C91 / Nm57), this protein is Glycogen synthase.